The sequence spans 992 residues: Leucine-rich repeat receptor-like serine/threonine-protein kinase BAM3 (992 aa).

The first 21 residues, 1–21, serve as a signal peptide directing secretion; that stretch reads MADKIFTFFLILSSISPLLCS. Topologically, residues 22-656 are extracellular; that stretch reads SLISPLNLSL…ARSRGEISAK (635 aa). The N-linked (GlcNAc...) asparagine glycan is linked to N28. Residues C64 and C71 are joined by a disulfide bond. Residues N75 and N87 are each glycosylated (N-linked (GlcNAc...) asparagine). 6 LRR repeats span residues 75–99, 100–124, 126–148, 150–173, 174–199, and 201–221; these read NQSI…ISRL, SPSL…IYEL, GLEV…GFSQ, TQLV…LTTL, TRLE…SFLS, and KFLS…LANI. N131 and N163 each carry an N-linked (GlcNAc...) asparagine glycan. N220 carries N-linked (GlcNAc...) asparagine glycosylation. A CLE45 peptide binding motif is present at residues 226–231; the sequence is QLYLGY. LRR repeat units follow at residues 246-270, 271-294, 296-320, 322-342, 343-366, 368-391, 393-414, 415-438, 439-462, 465-489, 491-513, 514-536, 537-561, 563-585, and 586-610; these read LINL…LGNL, KNLE…LGNM, SLKT…GLQK, QLFN…VSEL, PDLQ…LGSN, NLIE…CFGR, LKIL…LGQC, EPLW…LIYL, PNLS…EAGN, FSSL…IRNL, SLQI…IGSL, KSLL…EFGD, CMSL…ISQI, ILNY…LGYM, and KSLT…QFSY. 2 N-linked (GlcNAc...) asparagine glycosylation sites follow: N256 and N293. Residue N354 is glycosylated (N-linked (GlcNAc...) asparagine). N-linked (GlcNAc...) asparagine glycosylation is found at N440 and N472. Residue N525 is glycosylated (N-linked (GlcNAc...) asparagine). N568, N575, N597, N613, N631, and N635 each carry an N-linked (GlcNAc...) asparagine glycan. The chain crosses the membrane as a helical span at residues 657-677; it reads FKLFFGLGLLGFFLVFVVLAV. The Cytoplasmic portion of the chain corresponds to 678–992; it reads VKNRRMRKNN…ISQAKQPNTF (315 aa). The Protein kinase domain occupies 710-992; sequence VKENHVIGKG…ISQAKQPNTF (283 aa). Residues 716 to 724 and K738 contribute to the ATP site; that span reads IGKGGRGIV. Catalysis depends on D836, which acts as the Proton acceptor.

Belongs to the protein kinase superfamily. Ser/Thr protein kinase family. Interacts with CLE45, especially in roots. Binds to the dimer CLV2/CRN. In terms of tissue distribution, expressed in seedlings, roots, leaves, stems, inflorescences, flowers and siliques. In roots, confined to protophloem and sieve element precursor cells.

It localises to the cell membrane. The protein localises to the endoplasmic reticulum membrane. The enzyme catalyses L-seryl-[protein] + ATP = O-phospho-L-seryl-[protein] + ADP + H(+). It catalyses the reaction L-threonyl-[protein] + ATP = O-phospho-L-threonyl-[protein] + ADP + H(+). Its function is as follows. Necessary for male gametophyte development, as well as ovule specification and function. Required for the development of high-ordered vascular strands within the leaf and a correlated control of leaf shape, size and symmetry. LRR-rich receptor-like kinase (LRR-RLK) involved in the perception of CLE45 peptide ligand which mediates root growth inhibition by repressing protophloem differentiation; this mechanism requires CRN. BRX, BAM3, and CLE45 act together to regulate the transition of protophloem cells from proliferation to differentiation, thus impinging on postembryonic growth capacity of the root meristem. Necessary for CLE45 peptide-triggered accumulation of MAKR5 in developing sieve elements. This chain is Leucine-rich repeat receptor-like serine/threonine-protein kinase BAM3, found in Arabidopsis thaliana (Mouse-ear cress).